Reading from the N-terminus, the 218-residue chain is uncharacterized protein (218 aa).

Residues histidine 57, histidine 59, aspartate 61, histidine 62, histidine 138, aspartate 158, and histidine 199 each coordinate Zn(2+).

This sequence belongs to the metallo-beta-lactamase superfamily. Glyoxalase II family. Zn(2+) serves as cofactor.

This is an uncharacterized protein from Mycobacterium leprae (strain TN).